A 344-amino-acid polypeptide reads, in one-letter code: 5-formaminoimidazole-4-carboxamide-1-(beta)-D-ribofuranosyl 5'-monophosphate synthetase (344 aa).

5-amino-1-(5-phospho-beta-D-ribosyl)imidazole-4-carboxamide-binding residues include His31 and Ser96. Positions 130–324 constitute an ATP-grasp domain; that stretch reads MELLQRAGVP…YFDRPMDMGE (195 aa). ATP contacts are provided by residues 153–198 and Glu220; that span reads PVIV…VPAY. Residue Asn240 participates in 5-amino-1-(5-phospho-beta-D-ribosyl)imidazole-4-carboxamide binding. Residues Glu279 and Glu292 each coordinate Mg(2+).

This sequence belongs to the phosphohexose mutase family. Mg(2+) is required as a cofactor. It depends on Mn(2+) as a cofactor.

The enzyme catalyses 5-amino-1-(5-phospho-beta-D-ribosyl)imidazole-4-carboxamide + formate + ATP = 5-formamido-1-(5-phospho-D-ribosyl)imidazole-4-carboxamide + ADP + phosphate. The protein operates within purine metabolism; IMP biosynthesis via de novo pathway; 5-formamido-1-(5-phospho-D-ribosyl)imidazole-4-carboxamide from 5-amino-1-(5-phospho-D-ribosyl)imidazole-4-carboxamide (formate route): step 1/1. In terms of biological role, catalyzes the ATP- and formate-dependent formylation of 5-aminoimidazole-4-carboxamide-1-beta-d-ribofuranosyl 5'-monophosphate (AICAR) to 5-formaminoimidazole-4-carboxamide-1-beta-d-ribofuranosyl 5'-monophosphate (FAICAR) in the absence of folates. This chain is 5-formaminoimidazole-4-carboxamide-1-(beta)-D-ribofuranosyl 5'-monophosphate synthetase, found in Pyrobaculum neutrophilum (strain DSM 2338 / JCM 9278 / NBRC 100436 / V24Sta) (Thermoproteus neutrophilus).